The following is a 639-amino-acid chain: DNA gyrase subunit B (639 aa).

Over residues 392–402 (QAEELTRRKSA) the composition is skewed to basic and acidic residues. The disordered stretch occupies residues 392–417 (QAEELTRRKSALESTSLPGKLADCQS). The 115-residue stretch at 423–537 (SELFIVEGDS…AGYVYAAQPP (115 aa)) folds into the Toprim domain. Mg(2+) is bound by residues Glu-429, Asp-502, and Asp-504.

The protein belongs to the type II topoisomerase GyrB family. Heterotetramer, composed of two GyrA and two GyrB chains. In the heterotetramer, GyrA contains the active site tyrosine that forms a transient covalent intermediate with DNA, while GyrB binds cofactors and catalyzes ATP hydrolysis. The cofactor is Mg(2+). Mn(2+) is required as a cofactor. It depends on Ca(2+) as a cofactor.

It localises to the cytoplasm. The enzyme catalyses ATP-dependent breakage, passage and rejoining of double-stranded DNA.. Its function is as follows. A type II topoisomerase that negatively supercoils closed circular double-stranded (ds) DNA in an ATP-dependent manner to modulate DNA topology and maintain chromosomes in an underwound state. Negative supercoiling favors strand separation, and DNA replication, transcription, recombination and repair, all of which involve strand separation. Also able to catalyze the interconversion of other topological isomers of dsDNA rings, including catenanes and knotted rings. Type II topoisomerases break and join 2 DNA strands simultaneously in an ATP-dependent manner. The protein is DNA gyrase subunit B of Haloferax lucentense (strain DSM 14919 / JCM 9276 / NCIMB 13854 / Aa 2.2) (Haloferax alicantei).